The primary structure comprises 287 residues: Telomere repeat-binding factor 5 (287 aa).

Positions 1 to 62 (MGNQKLKWTA…WRNLSVPPGT (62 aa)) constitute an HTH myb-type domain. The segment at residues 28–58 (WKNILRDPEFADQLIHRSNIDLKDKWRNLSV) is a DNA-binding region (H-T-H motif). A disordered region spans residues 58 to 107 (VPPGTQSLTNKARPAKVKEEGDTPAADANDAVTIPRPIPTIPPPPGRRTL). Positions 93–103 (RPIPTIPPPPG) are enriched in pro residues. The H15 domain occupies 119–193 (NAPRYDGVIF…SIQNFYKIPD (75 aa)). Positions 233-259 (AACKVVEAENKIDVAKLAAEEFEKMTK) form a coiled coil.

This sequence belongs to the histone H1/H5 family. SMH subfamily.

The protein resides in the nucleus. It is found in the chromosome. In terms of biological role, binds preferentially double-stranded telomeric repeats. This Arabidopsis thaliana (Mouse-ear cress) protein is Telomere repeat-binding factor 5.